The chain runs to 348 residues: dTDP-glucose 4,6-dehydratase (348 aa).

NAD(+)-binding positions include 15–16, 37–40, 62–63, and 82–86; these read FI, DKLT, DI, and YAAES. Ser-86 and Asn-88 together coordinate substrate. Thr-101 lines the NAD(+) pocket. Thr-125 is a substrate binding site. Catalysis depends on Asp-126, which acts as the Proton donor. Catalysis depends on proton acceptor residues Glu-127 and Tyr-161. Residue 161-165 participates in NAD(+) binding; it reads YSSTK. Asn-190 contributes to the substrate binding site. Asn-191 contacts NAD(+). Substrate-binding positions include 200–205, 216–218, Arg-225, Asn-260, and 283–287; these read KFIPRQ, KLY, and DRAGH.

It belongs to the NAD(P)-dependent epimerase/dehydratase family. dTDP-glucose dehydratase subfamily. As to quaternary structure, homodimer. NAD(+) serves as cofactor.

The catalysed reaction is dTDP-alpha-D-glucose = dTDP-4-dehydro-6-deoxy-alpha-D-glucose + H2O. It functions in the pathway carbohydrate biosynthesis; dTDP-L-rhamnose biosynthesis. Its function is as follows. Catalyzes the dehydration of dTDP-D-glucose to form dTDP-6-deoxy-D-xylo-4-hexulose via a three-step process involving oxidation, dehydration and reduction. The protein is dTDP-glucose 4,6-dehydratase (rmlB) of Streptococcus mutans serotype c (strain ATCC 700610 / UA159).